The following is a 376-amino-acid chain: Pyrimidine monooxygenase RutA (376 aa).

Residues 61–62, asparagine 127, glutamate 136, 152–153, and serine 202 contribute to the FMN site; these read IK and RY.

It belongs to the NtaA/SnaA/DszA monooxygenase family. RutA subfamily.

The catalysed reaction is uracil + FMNH2 + NADH + O2 = (Z)-3-ureidoacrylate + FMN + NAD(+) + H2O + H(+). It catalyses the reaction thymine + FMNH2 + NADH + O2 = (Z)-2-methylureidoacrylate + FMN + NAD(+) + H2O + H(+). Functionally, catalyzes the pyrimidine ring opening between N-3 and C-4 by an unusual flavin hydroperoxide-catalyzed mechanism, adding oxygen atoms in the process to yield ureidoacrylate peracid, that immediately reacts with FMN forming ureidoacrylate and FMN-N(5)-oxide. The FMN-N(5)-oxide reacts spontaneously with NADH to produce FMN. Requires the flavin reductase RutF to regenerate FMN in vivo. The chain is Pyrimidine monooxygenase RutA from Methylorubrum populi (strain ATCC BAA-705 / NCIMB 13946 / BJ001) (Methylobacterium populi).